The sequence spans 360 residues: Putative transcription factor A494R (360 aa).

A zinc finger lies at 153-175; it reads CTCGGQMELWVNSTQSDLVCNEC.

The protein belongs to the nucleo-cytoplasmic large DNA viruses (NCLDVs) VLTF-3 family.

Putative transcription factor. This chain is Putative transcription factor A494R, found in Paramecium bursaria Chlorella virus 1 (PBCV-1).